A 71-amino-acid chain; its full sequence is Glucose-repressible gene protein (71 aa).

The interval 19-71 is disordered; it reads TATASKEANKDVAKDSNQGVGTRLNAAGDAISDKVSENKHDAKAEAHKQGATH. A compositionally biased stretch (basic and acidic residues) spans 49–71; it reads ISDKVSENKHDAKAEAHKQGATH.

This is Glucose-repressible gene protein (grg-1) from Neurospora crassa (strain ATCC 24698 / 74-OR23-1A / CBS 708.71 / DSM 1257 / FGSC 987).